The following is a 182-amino-acid chain: MRILGIDPGLQTTGFGVVDVDGHHLSYVASGTIRTTGAALGDLPGRLKILFDGITEVAARYQPDVATVEIVFVNVNPQSTLLLGQARGACVTALVASRLPVAEYTALQMKKAVVGHGRAAKSQVQEMVRRLLQLPGLPGTDAADALGLAITHAHAGAAMARLGEATSLNRRQHAMYRSGRAL.

Active-site residues include Asp-7, Glu-69, and Asp-141. Positions 7, 69, and 141 each coordinate Mg(2+).

It belongs to the RuvC family. Homodimer which binds Holliday junction (HJ) DNA. The HJ becomes 2-fold symmetrical on binding to RuvC with unstacked arms; it has a different conformation from HJ DNA in complex with RuvA. In the full resolvosome a probable DNA-RuvA(4)-RuvB(12)-RuvC(2) complex forms which resolves the HJ. Mg(2+) is required as a cofactor.

The protein localises to the cytoplasm. It catalyses the reaction Endonucleolytic cleavage at a junction such as a reciprocal single-stranded crossover between two homologous DNA duplexes (Holliday junction).. Its function is as follows. The RuvA-RuvB-RuvC complex processes Holliday junction (HJ) DNA during genetic recombination and DNA repair. Endonuclease that resolves HJ intermediates. Cleaves cruciform DNA by making single-stranded nicks across the HJ at symmetrical positions within the homologous arms, yielding a 5'-phosphate and a 3'-hydroxyl group; requires a central core of homology in the junction. The consensus cleavage sequence is 5'-(A/T)TT(C/G)-3'. Cleavage occurs on the 3'-side of the TT dinucleotide at the point of strand exchange. HJ branch migration catalyzed by RuvA-RuvB allows RuvC to scan DNA until it finds its consensus sequence, where it cleaves and resolves the cruciform DNA. This Paracidovorax citrulli (strain AAC00-1) (Acidovorax citrulli) protein is Crossover junction endodeoxyribonuclease RuvC.